The following is a 339-amino-acid chain: Uroporphyrinogen decarboxylase (339 aa).

Substrate is bound by residues 21 to 25 (RQAGR), phenylalanine 40, aspartate 71, tyrosine 147, serine 202, and histidine 315.

The protein belongs to the uroporphyrinogen decarboxylase family. As to quaternary structure, homodimer.

It localises to the cytoplasm. The catalysed reaction is uroporphyrinogen III + 4 H(+) = coproporphyrinogen III + 4 CO2. It functions in the pathway porphyrin-containing compound metabolism; protoporphyrin-IX biosynthesis; coproporphyrinogen-III from 5-aminolevulinate: step 4/4. Its function is as follows. Catalyzes the decarboxylation of four acetate groups of uroporphyrinogen-III to yield coproporphyrinogen-III. This Helicobacter pylori (strain ATCC 700392 / 26695) (Campylobacter pylori) protein is Uroporphyrinogen decarboxylase.